A 215-amino-acid chain; its full sequence is Ribonuclease T (215 aa).

Positions 20 to 194 (VVIDVETAGF…YDTERTAVLF (175 aa)) constitute an Exonuclease domain. Mg(2+)-binding residues include aspartate 23, glutamate 25, histidine 181, and aspartate 186. The Proton donor/acceptor role is filled by histidine 181.

This sequence belongs to the RNase T family. As to quaternary structure, homodimer. Mg(2+) serves as cofactor.

In terms of biological role, trims short 3' overhangs of a variety of RNA species, leaving a one or two nucleotide 3' overhang. Responsible for the end-turnover of tRNA: specifically removes the terminal AMP residue from uncharged tRNA (tRNA-C-C-A). Also appears to be involved in tRNA biosynthesis. This chain is Ribonuclease T, found in Salmonella choleraesuis (strain SC-B67).